Reading from the N-terminus, the 240-residue chain is UDP-2,3-diacylglucosamine hydrolase (240 aa).

Mn(2+)-binding residues include D7, H9, D40, N78, and H113. 78-79 (NR) provides a ligand contact to substrate. The substrate site is built by D121, S159, T163, K166, and H194. The Mn(2+) site is built by H194 and H196.

This sequence belongs to the LpxH family. Mn(2+) is required as a cofactor.

Its subcellular location is the cell inner membrane. It catalyses the reaction UDP-2-N,3-O-bis[(3R)-3-hydroxytetradecanoyl]-alpha-D-glucosamine + H2O = 2-N,3-O-bis[(3R)-3-hydroxytetradecanoyl]-alpha-D-glucosaminyl 1-phosphate + UMP + 2 H(+). It functions in the pathway glycolipid biosynthesis; lipid IV(A) biosynthesis; lipid IV(A) from (3R)-3-hydroxytetradecanoyl-[acyl-carrier-protein] and UDP-N-acetyl-alpha-D-glucosamine: step 4/6. Its function is as follows. Hydrolyzes the pyrophosphate bond of UDP-2,3-diacylglucosamine to yield 2,3-diacylglucosamine 1-phosphate (lipid X) and UMP by catalyzing the attack of water at the alpha-P atom. Involved in the biosynthesis of lipid A, a phosphorylated glycolipid that anchors the lipopolysaccharide to the outer membrane of the cell. The protein is UDP-2,3-diacylglucosamine hydrolase of Stutzerimonas stutzeri (strain A1501) (Pseudomonas stutzeri).